The sequence spans 1415 residues: MAGLIKKQILKHLSRFTKNLSPDKINLSTLKGEGQLTNLELDEEVLQNMLDLPTWLAINKVFCNKAAIRIPWTKLKTHPISLSLDKVIMEMSTCEEPRSCNGPSPLVTASGQSEYGFAEKVVEGISLSVNSIIIRIRAKAFNASFELSQLRIYSVNPSWQHGDLRFTRIQDPQRGEVLTFKEINWQMIRIEADAIQSCDHEIMSAPVRLITNQSKIRITLKRRLKDCNVVASKLIFMLDDLLWVLTDSQLKAMVQYAKSLSEAIEKSTEQRKSMASETTQSPTPPVSSQQVKNPQTSTTPEQNNAILKLFRDFDVKETSYHLVISHLDLHICDDIHSKEKAFVRRVTGGAMQLSFSQLTVDYYPYHREGDGCSHWMHYGDATKTRCSWAQELLHEFNSNIEMLRQAVKDHNPSSPIRTVPNASQQYGQTGFDQNVKRSSPTAFGEPPKSNPLSSSFVVRLADFNIFQVSTADQCRSSPKTMISCNKKSLYLPQEMSAIHIEFTEYYFPDGKNFPIPSPNLYVQLNALQFTLDEKSVLWLNQFVLDLRQSLDQFVAMYKLSDNSKSDEHVDIRVDGLMLKFIIPSQKKQDCHPDQPAGISIQTSEMIGSNTRQTANCRRSDLEAIFQDFKDYDFYSKNFTSFPRSHDHFDILHPIFQRHAFEQDTKMHDIYKGLVAPTLDTNALSTSAARDIWAIHFTQFWVDYEGIKSGKGRPVVFIDSFPFSIWICQPRRFLQSQKRTLCDGDPLQSISKSESTDFVGRLQRKKLLKQYYSTELGGSNTPLQKSQSLDSSLANPPTCKQTDADIHVLAHVQKHVSLQINHYQYIFLLLLQESIKQILENVKKDVEEVTGKPDDENKISVGLLLKSADVSLLLLPLPEDNSKSPLPCEGSPVTDHKLPSPSEGVTGDLIINNNVDLINKAIFESDLKGDPQKIVATDPLLSKSSSDTELLKRSPPYLDSTADKDLLEAELAFGQQIDRNNLKEDPGANIDISSSFLIHPLNNHINSNGPDHALAEDQFASPLLPEVEKKQLVDTSGIPKERCLPNLSVSYKNMKRSPSQFSLDNISIDSNLLDEQMIESDGSDHLEVGMEDFSSLNYPCTAETSSVELRNEEYCVSSPDAISAETSQDSRQDLMSVLVLKVVGINCGIDIKGEDATICLQINRVVPNQLGNVSVWQYLNSRNTGSDQKSTTDERKSSPEISLRLEIGPSARRHSPLAAENGFLQCNVSNFSSEFLTSTLANIHHFVEEDSVPEIMPMKIQVQNARIHLQDDSPRNNNTDPDPEPVVLNIENLFVERRDDGSFWIRGSPDTSLNSPWNHKETSSILQLDCSKSHSTNSKSKTSKFTQTISEHTSLPEIPDVINNQAWKAAGISKEQLVEENECLKQELAKTKMALAESHMERDRLLHQLKRVHIEK.

The Chorein N-terminal domain occupies 3–94 (GLIKKQILKH…DKVIMEMSTC (92 aa)). Disordered stretches follow at residues 267-300 (STEQ…STTP) and 882-904 (KSPL…SEGV). Residues 275-300 (ASETTQSPTPPVSSQQVKNPQTSTTP) show a composition bias toward polar residues. Residues 1367-1404 (KAAGISKEQLVEENECLKQELAKTKMALAESHMERDRL) are a coiled coil.

It is found in the cytoplasm. The protein resides in the cytosol. The protein localises to the early endosome. Its function is as follows. Tube-forming lipid transport protein which mediates the transfer of lipids between membranes at organelle contact sites. Required for retrograde traffic of vesicle clusters in the early endocytic pathway to the Golgi complex. The chain is Bridge-like lipid transfer protein family member 3B (bltp3b) from Xenopus laevis (African clawed frog).